Reading from the N-terminus, the 410-residue chain is Large ribosomal subunit protein uL4 (410 aa).

The protein belongs to the universal ribosomal protein uL4 family.

It is found in the cytoplasm. In Tetrahymena thermophila (strain SB210), this protein is Large ribosomal subunit protein uL4 (RPL4).